The primary structure comprises 647 residues: DNA ligase (647 aa).

NAD(+) is bound by residues 30–34, 79–80, and Glu-105; these read DEEYD and SM. Lys-107 functions as the N6-AMP-lysine intermediate in the catalytic mechanism. NAD(+) contacts are provided by Arg-128, Glu-162, and Lys-301. Zn(2+)-binding residues include Cys-395, Cys-398, Cys-411, and Cys-416. Positions 570–647 constitute a BRCT domain; that stretch reads KSDGVIFGKT…ESAFNELVKE (78 aa).

Belongs to the NAD-dependent DNA ligase family. LigA subfamily. Mg(2+) serves as cofactor. It depends on Mn(2+) as a cofactor.

It catalyses the reaction NAD(+) + (deoxyribonucleotide)n-3'-hydroxyl + 5'-phospho-(deoxyribonucleotide)m = (deoxyribonucleotide)n+m + AMP + beta-nicotinamide D-nucleotide.. DNA ligase that catalyzes the formation of phosphodiester linkages between 5'-phosphoryl and 3'-hydroxyl groups in double-stranded DNA using NAD as a coenzyme and as the energy source for the reaction. It is essential for DNA replication and repair of damaged DNA. The protein is DNA ligase of Campylobacter jejuni subsp. jejuni serotype O:2 (strain ATCC 700819 / NCTC 11168).